The following is a 249-amino-acid chain: uncharacterized protein (249 aa).

NADP(+) is bound at residue 11 to 34 (IFGGRSQIGGELARRLAAGATMVL). Ser-142 serves as a coordination point for substrate. The active-site Proton acceptor is the Tyr-155.

The protein belongs to the short-chain dehydrogenases/reductases (SDR) family.

This is an uncharacterized protein from Mycobacterium tuberculosis (strain CDC 1551 / Oshkosh).